The chain runs to 262 residues: Methanethiol S-methyltransferase (262 aa).

Helical transmembrane passes span 22-42 (LYSL…IGFV), 55-75 (PGAS…LFAV), 100-120 (ATYV…WQPI), 134-154 (AVLT…TFLI), and 195-215 (GFLM…VFAL).

This sequence belongs to the nurim family.

It is found in the membrane. The enzyme catalyses methanethiol + S-adenosyl-L-methionine = dimethyl sulfide + S-adenosyl-L-homocysteine + H(+). Its function is as follows. Catalyzes the methylation of methanethiol (MeSH) to yield dimethylsulphide (DMS). The sequence is that of Methanethiol S-methyltransferase from Pseudomonas deceptionensis.